The primary structure comprises 29 residues: Cytochrome b6-f complex subunit 8 (29 aa).

The helical transmembrane segment at 3 to 23 (ILTLGWVSVLTLFTYSIAMVV) threads the bilayer.

This sequence belongs to the PetN family. In terms of assembly, the 4 large subunits of the cytochrome b6-f complex are cytochrome b6, subunit IV (17 kDa polypeptide, PetD), cytochrome f and the Rieske protein, while the 4 small subunits are PetG, PetL, PetM and PetN. The complex functions as a dimer.

The protein localises to the cellular thylakoid membrane. In terms of biological role, component of the cytochrome b6-f complex, which mediates electron transfer between photosystem II (PSII) and photosystem I (PSI), cyclic electron flow around PSI, and state transitions. This chain is Cytochrome b6-f complex subunit 8, found in Acaryochloris marina (strain MBIC 11017).